Consider the following 414-residue polypeptide: MNRQSWLLNLSLLKTHPAFRAVFLARFISIVSLGLLGVAVPVQIQMMTHSTWQVGLSVTLTGGAMFIGLMVGGVLADRYERKKVILLARGTCGIGFIGLCVNSLLPEPSLLAIYLLGLWDGFFASLGVTALLAATPALVGRENLMQAGAITMLTVRLGSVISPMLGGILLASGGVAWNYGLAAAGTFITLLPLLTLPRLPVPPQPRENPFIALLAAFRFLLASPLIGGIALLGGLVTMASAVRVLYPALAMSWQMSAAQIGLLYAAIPLGAAIGALTSGQLAHSVRPGLIMLVSTVGSFLAVGLFAIMPVWTAGVICLALFGWLSAISSLLQYTLLQTQTPENMLGRMNGLWTAQNVTGDAIGAALLGGLGAMMTPVASASVSGFGLVIIGLLLLLVLGELRRFRQTPPVSDAG.

Residues 1-21 (MNRQSWLLNLSLLKTHPAFRA) lie on the Cytoplasmic side of the membrane. The chain crosses the membrane as a helical span at residues 22 to 42 (VFLARFISIVSLGLLGVAVPV). The Periplasmic portion of the chain corresponds to 43–55 (QIQMMTHSTWQVG). Residues 56 to 76 (LSVTLTGGAMFIGLMVGGVLA) form a helical membrane-spanning segment. At 77–83 (DRYERKK) the chain is on the cytoplasmic side. The chain crosses the membrane as a helical span at residues 84 to 104 (VILLARGTCGIGFIGLCVNSL). Residues 105–109 (LPEPS) are Periplasmic-facing. A helical transmembrane segment spans residues 110-130 (LLAIYLLGLWDGFFASLGVTA). At 131–156 (LLAATPALVGRENLMQAGAITMLTVR) the chain is on the cytoplasmic side. A helical membrane pass occupies residues 157 to 177 (LGSVISPMLGGILLASGGVAW). N178 is a topological domain (periplasmic). The chain crosses the membrane as a helical span at residues 179–199 (YGLAAAGTFITLLPLLTLPRL). Residues 200–218 (PVPPQPRENPFIALLAAFR) lie on the Cytoplasmic side of the membrane. The chain crosses the membrane as a helical span at residues 219-239 (FLLASPLIGGIALLGGLVTMA). At 240-256 (SAVRVLYPALAMSWQMS) the chain is on the periplasmic side. The chain crosses the membrane as a helical span at residues 257 to 277 (AAQIGLLYAAIPLGAAIGALT). The Cytoplasmic segment spans residues 278 to 287 (SGQLAHSVRP). A helical transmembrane segment spans residues 288 to 307 (GLIMLVSTVGSFLAVGLFAI). Over 308-313 (MPVWTA) the chain is Periplasmic. A helical transmembrane segment spans residues 314–336 (GVICLALFGWLSAISSLLQYTLL). The Cytoplasmic portion of the chain corresponds to 337 to 356 (QTQTPENMLGRMNGLWTAQN). Residues 357-377 (VTGDAIGAALLGGLGAMMTPV) form a helical membrane-spanning segment. A378 is a topological domain (periplasmic). The chain crosses the membrane as a helical span at residues 379–399 (SASVSGFGLVIIGLLLLLVLG). The Cytoplasmic portion of the chain corresponds to 400-414 (ELRRFRQTPPVSDAG).

This sequence belongs to the major facilitator superfamily. EntS (TC 2.A.1.38) family.

The protein resides in the cell inner membrane. Its function is as follows. Component of an export pathway for enterobactin. This Salmonella choleraesuis (strain SC-B67) protein is Enterobactin exporter EntS.